The primary structure comprises 95 residues: Aspartyl/glutamyl-tRNA(Asn/Gln) amidotransferase subunit C (95 aa).

Belongs to the GatC family. Heterotrimer of A, B and C subunits.

The catalysed reaction is L-glutamyl-tRNA(Gln) + L-glutamine + ATP + H2O = L-glutaminyl-tRNA(Gln) + L-glutamate + ADP + phosphate + H(+). It catalyses the reaction L-aspartyl-tRNA(Asn) + L-glutamine + ATP + H2O = L-asparaginyl-tRNA(Asn) + L-glutamate + ADP + phosphate + 2 H(+). Its function is as follows. Allows the formation of correctly charged Asn-tRNA(Asn) or Gln-tRNA(Gln) through the transamidation of misacylated Asp-tRNA(Asn) or Glu-tRNA(Gln) in organisms which lack either or both of asparaginyl-tRNA or glutaminyl-tRNA synthetases. The reaction takes place in the presence of glutamine and ATP through an activated phospho-Asp-tRNA(Asn) or phospho-Glu-tRNA(Gln). The polypeptide is Aspartyl/glutamyl-tRNA(Asn/Gln) amidotransferase subunit C (Rhodopseudomonas palustris (strain TIE-1)).